Here is a 339-residue protein sequence, read N- to C-terminus: ADP-L-glycero-D-manno-heptose-6-epimerase (339 aa).

Residues 11–12 (FI), 32–33 (DD), lysine 39, lysine 54, 75–79 (EGACS), and asparagine 92 contribute to the NADP(+) site. Tyrosine 139 serves as the catalytic Proton acceptor. Residue lysine 143 coordinates NADP(+). Asparagine 170 lines the substrate pocket. NADP(+)-binding residues include valine 171 and lysine 179. Lysine 179 acts as the Proton acceptor in catalysis. Substrate-binding positions include arginine 181, histidine 188, 202 to 205 (FGEY), arginine 215, and tyrosine 294.

Belongs to the NAD(P)-dependent epimerase/dehydratase family. HldD subfamily. As to quaternary structure, homopentamer. Requires NADP(+) as cofactor.

The catalysed reaction is ADP-D-glycero-beta-D-manno-heptose = ADP-L-glycero-beta-D-manno-heptose. Its pathway is nucleotide-sugar biosynthesis; ADP-L-glycero-beta-D-manno-heptose biosynthesis; ADP-L-glycero-beta-D-manno-heptose from D-glycero-beta-D-manno-heptose 7-phosphate: step 4/4. Catalyzes the interconversion between ADP-D-glycero-beta-D-manno-heptose and ADP-L-glycero-beta-D-manno-heptose via an epimerization at carbon 6 of the heptose. This is ADP-L-glycero-D-manno-heptose-6-epimerase from Polynucleobacter necessarius subsp. necessarius (strain STIR1).